Reading from the N-terminus, the 88-residue chain is Small ribosomal subunit protein uS19 (88 aa).

This sequence belongs to the universal ribosomal protein uS19 family.

Protein S19 forms a complex with S13 that binds strongly to the 16S ribosomal RNA. This chain is Small ribosomal subunit protein uS19, found in Chlamydia caviae (strain ATCC VR-813 / DSM 19441 / 03DC25 / GPIC) (Chlamydophila caviae).